A 317-amino-acid polypeptide reads, in one-letter code: E3 ubiquitin-protein ligase NRDP1 (317 aa).

Residues C18–R57 form an RING-type; degenerate zinc finger. The segment at K78–L138 adopts an SIAH-type; degenerate zinc-finger fold.

As to quaternary structure, interacts with USP8, ERBB3, PRKN and BIRC6. Interacts with CSF2RB, EPOR, IL3RA, MYD88 and TBK1. Interacts with Clec16a. Autoubiquitinated. Autoubiquitination leads to proteasomal degradation. Deubiquitinated by USP8 to get stabilized which induces apoptosis.

The enzyme catalyses S-ubiquitinyl-[E2 ubiquitin-conjugating enzyme]-L-cysteine + [acceptor protein]-L-lysine = [E2 ubiquitin-conjugating enzyme]-L-cysteine + N(6)-ubiquitinyl-[acceptor protein]-L-lysine.. Its pathway is protein modification; protein ubiquitination. Its function is as follows. Acts as E3 ubiquitin-protein ligase and regulates the degradation of target proteins. Polyubiquitinates MYD88. Negatively regulates MYD88-dependent production of pro-inflammatory cytokines. Can promote TRIF-dependent production of type I interferon and inhibits infection with vesicular stomatitis virus. Also promotes activation of TBK1 and IRF3. Involved in the ubiquitination of erythropoietin (EPO) and interleukin-3 (IL-3) receptors. Thus, through maintaining basal levels of cytokine receptors, RNF41 is involved in the control of hematopoietic progenitor cell differentiation into myeloerythroid lineages. Contributes to the maintenance of steady-state ERBB3 levels by mediating its growth factor-independent degradation. Involved in the degradation of the inhibitor of apoptosis BIRC6 and thus is an important regulator of cell death by promoting apoptosis. Also acts as a PRKN modifier that accelerates its degradation, resulting in a reduction of PRKN activity, influencing the balance of intracellular redox state. The RNF41-PRKN pathway regulates autophagosome-lysosome fusion during late mitophagy. Mitophagy is a selective form of autophagy necessary for mitochondrial quality control. The polypeptide is E3 ubiquitin-protein ligase NRDP1 (Rnf41) (Mus musculus (Mouse)).